Consider the following 138-residue polypeptide: MVKLIPRLSSRRNGRIRLRKNTRKISQGVIHIQASLQNTIVTVTDVRGRVVSWASAGSAGFKGTTRRTPFAAQTAATNAIRTAINHGMREADVLIKGPGLGRDAALRAIRRSGIRLELILDVTPMPHNGCRPPKKRRV.

Belongs to the universal ribosomal protein uS11 family. In terms of assembly, part of the 30S ribosomal subunit.

Its subcellular location is the plastid. The chain is Small ribosomal subunit protein uS11c from Cuscuta gronovii (Common dodder).